A 128-amino-acid chain; its full sequence is Large ribosomal subunit protein bL12 (128 aa).

Belongs to the bacterial ribosomal protein bL12 family. Homodimer. Part of the ribosomal stalk of the 50S ribosomal subunit. Forms a multimeric L10(L12)X complex, where L10 forms an elongated spine to which 2 to 4 L12 dimers bind in a sequential fashion. Binds GTP-bound translation factors.

In terms of biological role, forms part of the ribosomal stalk which helps the ribosome interact with GTP-bound translation factors. Is thus essential for accurate translation. The sequence is that of Large ribosomal subunit protein bL12 from Trichormus variabilis (strain ATCC 29413 / PCC 7937) (Anabaena variabilis).